The primary structure comprises 618 residues: UvrABC system protein C (618 aa).

The GIY-YIG domain maps to 20-98; it reads TAPGVYRMYA…IKSLSPRYNV (79 aa). The region spanning 207 to 242 is the UVR domain; it reads DQLGEEIMHSMQQASEALEFERAARLRDLLSSLRSM.

The protein belongs to the UvrC family. As to quaternary structure, interacts with UvrB in an incision complex.

It is found in the cytoplasm. The UvrABC repair system catalyzes the recognition and processing of DNA lesions. UvrC both incises the 5' and 3' sides of the lesion. The N-terminal half is responsible for the 3' incision and the C-terminal half is responsible for the 5' incision. This chain is UvrABC system protein C, found in Xanthomonas campestris pv. campestris (strain 8004).